The chain runs to 400 residues: MQSVDVAIVGGGMVGLAVACGLQGSGLRVAVLEQRVQEPLAANAPPQLRVSAINAASEKLLTRLGVWQDILSRRASCYHGMEVWDKDSFGHISFDDQSMGYSHLGHIVENSVIHYALWNKAHQSSDITLLAPAELQQVAWGENETFLTLKDGSMLTARLVIGADGANSWLRNKADIPLTFWDYQHHALVATIRTEEPHDAVARQVFHGEGILAFLPLSDPHLCSIVWSLSPEEAQRMQQASEDEFNRALNIAFDNRLGLCKVESARQVFPLTGRYARQFASHRLALVGDAAHTIHPLAGQGVNLGFMDAAELIAELKRLHRQGKDIGQYIYLRRYERSRKHSAALMLAGMQGFRDLFSGTNPAKKLLRDIGLKLADTLPGVKPQLIRQAMGLNDLPEWLR.

Residues 49 to 52 (RVSA) and 297 to 303 (LAGQGVN) each bind FAD.

Belongs to the UbiH/COQ6 family. As to quaternary structure, homotetramer. Component of the Ubi complex metabolon, which regroups five ubiquinone biosynthesis proteins (UbiE, UbiF, UbiG, UbiH and UbiI) and two accessory factors (UbiK and the lipid-binding protein UbiJ). The cofactor is FAD.

It localises to the cytoplasm. It carries out the reaction 2-all-trans-octaprenylphenol + NADPH + O2 + H(+) = 3-(all-trans-octaprenyl)benzene-1,2-diol + NADP(+) + H2O. It catalyses the reaction a 2-(all-trans-polyprenyl)phenol + NADPH + O2 + H(+) = a 3-(all-trans-polyprenyl)benzene-1,2-diol + NADP(+) + H2O. The protein operates within cofactor biosynthesis; ubiquinone biosynthesis. FAD-dependent monooxygenase required for the aerobic hydroxylation of 2-octaprenylphenol to 2-octaprenyl-6-hydroxy-phenol, the first hydroxylation step in coenzyme Q (ubiquinone) biosynthesis. The protein is 2-octaprenylphenol hydroxylase of Escherichia coli (strain K12).